A 1134-amino-acid polypeptide reads, in one-letter code: Envelopment polyprotein (1134 aa).

The first 16 residues, 1-16 (MWSLLLLAALVGQGFA), serve as a signal peptide directing secretion. Topologically, residues 17-484 (LKNVFDMRIQ…PGFHGWATAA (468 aa)) are lumenal. Cystine bridges form between C27–C149, C61–C155, C107–C126, C131–C136, C173–C183, C208–C245, C232–C349, C374–C433, C378–C387, and C403–C422. N132 is a glycosylation site (N-linked (GlcNAc...) asparagine; by host). N233 and N345 each carry an N-linked (GlcNAc...) asparagine; by host glycan. N-linked (GlcNAc...) asparagine; by host glycosylation occurs at N397. The chain crosses the membrane as a helical span at residues 485-504 (LLITFCFGWVLIPACTLAIL). Topologically, residues 505 to 626 (LVLKFFANIL…NLFRYKSRCY (122 aa)) are cytoplasmic. Positions 514–531 (LHTSNQENRFKAILRKIK) are binding to the ribonucleoprotein. CCHC-type zinc fingers lie at residues 543–563 (CEIC…NLSC) and 568–589 (CPYC…YKVC). 3 binding to the ribonucleoprotein regions span residues 586 to 603 (YKVC…KKTV), 590 to 601 (QATHRFREDLKK), and 609 to 623 (WARL…RYKS). In terms of domain architecture, ITAM spans 609–632 (WARLYRTLNLFRYKSRCYILTMWT). The short motif at 613-616 (YRTL) is the YxxL element. The helical transmembrane segment at 627–647 (ILTMWTLLLIIESILWAASAA) threads the bilayer. Residues 648–1105 (EIPLVPLWTD…WVMGIINGNW (458 aa)) lie on the Lumenal side of the membrane. 8 disulfide bridges follow: C734–C769, C738–C776, C750–C884, C764–C895, C779–C903, C805–C814, C822–C831, and C862–C866. The segment at 756 to 776 (YEYENSWACNPPDCPGVGTGC) is fusion loop. An N-linked (GlcNAc...) asparagine; by host glycan is attached at N927. 5 disulfide bridges follow: C969/C999, C992/C1044, C1009/C1014, C1045/C1050, and C1084/C1088. The helical transmembrane segment at 1106 to 1125 (VVLIVLCVLLLFSLILLSIL) threads the bilayer. Residues 1121–1134 (LLSILCPVRKHKKS) are binding to the ribonucleoprotein. The Cytoplasmic segment spans residues 1126-1134 (CPVRKHKKS).

This sequence belongs to the hantavirus envelope glycoprotein family. In terms of assembly, homodimer. Homotetramer; forms heterotetrameric Gn-Gc spikes in the pre-fusion conformation. Interacts (via C-terminus) with the nucleoprotein. Interacts with host TUFM; this interaction contributes to the virus-induced degradation of mitochondria by autophagy, which leads to degradation of host MAVS and inhibition of type I interferon (IFN) responses. Interacts with host MAP1LC3B; this interaction contributes to the virus-induced degradation of mitochondria by autophagy, which leads to degradation of host MAVS and inhibition of type I interferon (IFN) responses. Homodimer. Homotetramer; forms heterotetrameric Gn-Gc spikes in the pre-fusion conformation. Homotrimer; forms homotrimer in the post-fusion conformation at acidic pH. Interacts (via C-terminus) with the nucleoprotein. In terms of processing, envelope polyprotein precursor is quickly cleaved in vivo just after synthesis, presumably by host signal peptidase.

The protein localises to the virion membrane. It is found in the host cell surface. Its subcellular location is the host Golgi apparatus membrane. It localises to the host endoplasmic reticulum membrane. The protein resides in the host mitochondrion. In terms of biological role, forms homotetramers with glycoprotein C at the surface of the virion. Attaches the virion to host cell receptors including integrin ITGAV/ITGB3. This attachment induces virion internalization predominantly through clathrin-dependent endocytosis. Mediates the assembly and budding of infectious virus particles through its interaction with the nucleocapsid protein and the viral genome. May dysregulate normal immune and endothelial cell responses through an ITAM motif. Translocates to mitochondria, binds to host TUFM and recruits MAP1LC3B. These interactions induce mitochondrial autophagy and therefore destruction of host MAVS leading to inhibition of type I interferon (IFN) responses. Concomitant breakdown of glycoprotein N is apparently prevented by the nucleoprotein that may inhibit Gn-stimulated autophagosome-lysosome fusion. Interacts with the viral genomic RNA. Its function is as follows. Forms homotetramers with glycoprotein N at the surface of the virion. Attaches the virion to host cell receptors including integrin ITGAV/ITGB3. This attachment induces virion internalization predominantly through clathrin-dependent endocytosis. Class II fusion protein that promotes fusion of viral membrane with host endosomal membrane after endocytosis of the virion. This chain is Envelopment polyprotein (GP), found in Homo sapiens (Human).